The primary structure comprises 360 residues: Chorismate synthase (360 aa).

NADP(+) contacts are provided by arginine 48 and arginine 54. FMN is bound by residues 125–127, 246–247, glycine 286, 301–305, and arginine 327; these read RSS, NA, and KPTSS.

The protein belongs to the chorismate synthase family. Homotetramer. FMNH2 is required as a cofactor.

It carries out the reaction 5-O-(1-carboxyvinyl)-3-phosphoshikimate = chorismate + phosphate. It participates in metabolic intermediate biosynthesis; chorismate biosynthesis; chorismate from D-erythrose 4-phosphate and phosphoenolpyruvate: step 7/7. Its function is as follows. Catalyzes the anti-1,4-elimination of the C-3 phosphate and the C-6 proR hydrogen from 5-enolpyruvylshikimate-3-phosphate (EPSP) to yield chorismate, which is the branch point compound that serves as the starting substrate for the three terminal pathways of aromatic amino acid biosynthesis. This reaction introduces a second double bond into the aromatic ring system. The sequence is that of Chorismate synthase from Glaesserella parasuis serovar 5 (strain SH0165) (Haemophilus parasuis).